Here is a 376-residue protein sequence, read N- to C-terminus: Arginine/serine-rich coiled-coil protein 2 (376 aa).

The segment at 1–171 (MIRTNFLLKQ…PSPPPFRGRN (171 aa)) is disordered. The span at 13–52 (RHESKDKSSKRHKSEEHNDKEHSSDKGRERLNSSENGEDR) shows a compositional bias: basic and acidic residues. S45 bears the Phosphoserine mark. Residues 53–155 (HKRKERKSSR…KRIEKPRRFS (103 aa)) are compositionally biased toward basic residues. The stretch at 171–214 (NTAMDAQEALARRLERAKKLQEQREKEMVEKQKQQEMAAAAAAT) forms a coiled coil. K317 participates in a covalent cross-link: Glycyl lysine isopeptide (Lys-Gly) (interchain with G-Cter in SUMO1); alternate. Residue K317 forms a Glycyl lysine isopeptide (Lys-Gly) (interchain with G-Cter in SUMO2); alternate linkage. Residue S318 is modified to Phosphoserine.

This sequence belongs to the RSRC2 family.

This Rattus norvegicus (Rat) protein is Arginine/serine-rich coiled-coil protein 2 (Rsrc2).